The sequence spans 157 residues: MEKVPMTAGGYQTLDEELKRLKTIERPAVIAAISEARQHGDLSENAEYHAAKERQGWIEGRIAEIEDKIARAQVIDVSKLSGKQVKFGATVSVVDEDTEEESRYQIVGDHEADVKEGRISLSSPLSRAMIGKEVGEVVEVYTPGGVKAYEILKVEWV.

The protein belongs to the GreA/GreB family.

In terms of biological role, necessary for efficient RNA polymerase transcription elongation past template-encoded arresting sites. The arresting sites in DNA have the property of trapping a certain fraction of elongating RNA polymerases that pass through, resulting in locked ternary complexes. Cleavage of the nascent transcript by cleavage factors such as GreA or GreB allows the resumption of elongation from the new 3'terminus. GreA releases sequences of 2 to 3 nucleotides. The protein is Transcription elongation factor GreA of Caulobacter sp. (strain K31).